A 134-amino-acid chain; its full sequence is Small ribosomal subunit protein uS8c (134 aa).

It belongs to the universal ribosomal protein uS8 family. Part of the 30S ribosomal subunit.

The protein resides in the plastid. It localises to the chloroplast. Its function is as follows. One of the primary rRNA binding proteins, it binds directly to 16S rRNA central domain where it helps coordinate assembly of the platform of the 30S subunit. The chain is Small ribosomal subunit protein uS8c (rps8) from Aethionema cordifolium (Lebanon stonecress).